The chain runs to 277 residues: Anamorsin homolog (277 aa).

Residues 1–160 (MDTKRMLQNS…NIGSSFALKK (160 aa)) form an N-terminal SAM-like domain region. The linker stretch occupies residues 161–188 (SIKSPVKVQNDDYSDLIDEDSLLTEEDL). [2Fe-2S] cluster is bound by residues Cys199, Cys208, Cys211, and Cys213. The fe-S binding site A stretch occupies residues 199–213 (CEVGSTRKACKNCTC). [4Fe-4S] cluster is bound by residues Cys238, Cys241, Cys249, and Cys252. 2 consecutive short sequence motifs (cx2C motif) follow at residues 238–241 (CGSC) and 249–252 (CGTC). Residues 238-252 (CGSCGLGDAFRCGTC) are fe-S binding site B.

It belongs to the anamorsin family. Monomer. It depends on [2Fe-2S] cluster as a cofactor. The cofactor is [4Fe-4S] cluster.

It localises to the cytoplasm. It is found in the mitochondrion intermembrane space. Component of the cytosolic iron-sulfur (Fe-S) protein assembly (CIA) machinery. Required for the maturation of extramitochondrial Fe-S proteins. Part of an electron transfer chain functioning in an early step of cytosolic Fe-S biogenesis, facilitating the de novo assembly of a [4Fe-4S] cluster on the cytosolic Fe-S scaffold complex. Electrons are transferred from NADPH via a FAD- and FMN-containing diflavin oxidoreductase. Together with the diflavin oxidoreductase, also required for the assembly of the diferric tyrosyl radical cofactor of ribonucleotide reductase (RNR), probably by providing electrons for reduction during radical cofactor maturation in the catalytic small subunit. This is Anamorsin homolog from Populus trichocarpa (Western balsam poplar).